The following is a 329-amino-acid chain: Biotin synthase (329 aa).

The 225-residue stretch at 38–262 (NTIQVSTLLS…IMPHSYIRLS (225 aa)) folds into the Radical SAM core domain. Residues Cys53, Cys57, and Cys60 each coordinate [4Fe-4S] cluster. Cys97, Cys128, Cys188, and Arg260 together coordinate [2Fe-2S] cluster.

It belongs to the radical SAM superfamily. Biotin synthase family. In terms of assembly, homodimer. It depends on [4Fe-4S] cluster as a cofactor. Requires [2Fe-2S] cluster as cofactor.

It carries out the reaction (4R,5S)-dethiobiotin + (sulfur carrier)-SH + 2 reduced [2Fe-2S]-[ferredoxin] + 2 S-adenosyl-L-methionine = (sulfur carrier)-H + biotin + 2 5'-deoxyadenosine + 2 L-methionine + 2 oxidized [2Fe-2S]-[ferredoxin]. It functions in the pathway cofactor biosynthesis; biotin biosynthesis; biotin from 7,8-diaminononanoate: step 2/2. Its function is as follows. Catalyzes the conversion of dethiobiotin (DTB) to biotin by the insertion of a sulfur atom into dethiobiotin via a radical-based mechanism. This is Biotin synthase from Acinetobacter calcoaceticus.